We begin with the raw amino-acid sequence, 211 residues long: Large ribosomal subunit protein uL3 (211 aa).

Position 150 is an N5-methylglutamine (Gln-150).

It belongs to the universal ribosomal protein uL3 family. Part of the 50S ribosomal subunit. Forms a cluster with proteins L14 and L19. Methylated by PrmB.

Its function is as follows. One of the primary rRNA binding proteins, it binds directly near the 3'-end of the 23S rRNA, where it nucleates assembly of the 50S subunit. The polypeptide is Large ribosomal subunit protein uL3 (Pseudomonas putida (strain GB-1)).